The sequence spans 262 residues: Hydroxyethylthiazole kinase (262 aa).

Methionine 50 contributes to the substrate binding site. The ATP site is built by arginine 125 and threonine 171. Substrate is bound at residue glycine 198.

This sequence belongs to the Thz kinase family. Mg(2+) is required as a cofactor.

It catalyses the reaction 5-(2-hydroxyethyl)-4-methylthiazole + ATP = 4-methyl-5-(2-phosphooxyethyl)-thiazole + ADP + H(+). It participates in cofactor biosynthesis; thiamine diphosphate biosynthesis; 4-methyl-5-(2-phosphoethyl)-thiazole from 5-(2-hydroxyethyl)-4-methylthiazole: step 1/1. Its function is as follows. Catalyzes the phosphorylation of the hydroxyl group of 4-methyl-5-beta-hydroxyethylthiazole (THZ). The chain is Hydroxyethylthiazole kinase from Escherichia coli (strain 55989 / EAEC).